The chain runs to 550 residues: Glucose-6-phosphate isomerase (550 aa).

The active-site Proton donor is E356. Active-site residues include H387 and K515.

The protein belongs to the GPI family.

The protein resides in the cytoplasm. It catalyses the reaction alpha-D-glucose 6-phosphate = beta-D-fructose 6-phosphate. It functions in the pathway carbohydrate biosynthesis; gluconeogenesis. Its pathway is carbohydrate degradation; glycolysis; D-glyceraldehyde 3-phosphate and glycerone phosphate from D-glucose: step 2/4. Its function is as follows. Catalyzes the reversible isomerization of glucose-6-phosphate to fructose-6-phosphate. In Vibrio vulnificus (strain YJ016), this protein is Glucose-6-phosphate isomerase.